A 228-amino-acid polypeptide reads, in one-letter code: LexA repressor (228 aa).

Residues 26–46 (FDEMKDALDLRSKSGIHRLIT) constitute a DNA-binding region (H-T-H motif). Active-site for autocatalytic cleavage activity residues include Ser149 and Lys187.

Belongs to the peptidase S24 family. As to quaternary structure, homodimer.

The catalysed reaction is Hydrolysis of Ala-|-Gly bond in repressor LexA.. Its function is as follows. Represses a number of genes involved in the response to DNA damage (SOS response), including recA and lexA. In the presence of single-stranded DNA, RecA interacts with LexA causing an autocatalytic cleavage which disrupts the DNA-binding part of LexA, leading to derepression of the SOS regulon and eventually DNA repair. This Cereibacter sphaeroides (strain ATCC 17025 / ATH 2.4.3) (Rhodobacter sphaeroides) protein is LexA repressor.